The chain runs to 81 residues: Albumin-1 (81 aa).

Residues 27-34 (LSSVAKMI) constitute a propeptide that is removed on maturation.

Post-translationally, three disulfide bonds are probably present. In terms of processing, the C-terminal glycine may be removed from A1b.

Functionally, A1b binds to basic 7S globulin (BG) and stimulates its phosphorylation activity. The sequence is that of Albumin-1 (LEG1) from Lupinus angustifolius (Narrow-leaved blue lupine).